Here is a 350-residue protein sequence, read N- to C-terminus: Small ribosomal subunit biogenesis GTPase RsgA (350 aa).

The span at 1–17 shows a compositional bias: polar residues; that stretch reads MSKNKLSKGQQRRVNAN. The tract at residues 1–33 is disordered; that stretch reads MSKNKLSKGQQRRVNANHQRRLKTSKEKPDYDD. Residues 104-273 enclose the CP-type G domain; it reads TSVLTRPDFY…VIDSPGVREF (170 aa). Residues 160–163 and 214–222 contribute to the GTP site; these read NKID and GQSGVGKSS. Zn(2+) contacts are provided by cysteine 297, cysteine 302, histidine 304, and cysteine 310.

This sequence belongs to the TRAFAC class YlqF/YawG GTPase family. RsgA subfamily. Monomer. Associates with 30S ribosomal subunit, binds 16S rRNA. The cofactor is Zn(2+).

The protein resides in the cytoplasm. Functionally, one of several proteins that assist in the late maturation steps of the functional core of the 30S ribosomal subunit. Helps release RbfA from mature subunits. May play a role in the assembly of ribosomal proteins into the subunit. Circularly permuted GTPase that catalyzes slow GTP hydrolysis, GTPase activity is stimulated by the 30S ribosomal subunit. The protein is Small ribosomal subunit biogenesis GTPase RsgA of Escherichia coli O6:H1 (strain CFT073 / ATCC 700928 / UPEC).